Consider the following 133-residue polypeptide: ATP synthase epsilon chain, chloroplastic (133 aa).

Belongs to the ATPase epsilon chain family. As to quaternary structure, F-type ATPases have 2 components, CF(1) - the catalytic core - and CF(0) - the membrane proton channel. CF(1) has five subunits: alpha(3), beta(3), gamma(1), delta(1), epsilon(1). CF(0) has three main subunits: a, b and c.

The protein localises to the plastid. Its subcellular location is the chloroplast thylakoid membrane. In terms of biological role, produces ATP from ADP in the presence of a proton gradient across the membrane. This chain is ATP synthase epsilon chain, chloroplastic, found in Trieres chinensis (Marine centric diatom).